The sequence spans 297 residues: tRNA pseudouridine synthase B (297 aa).

The active-site Nucleophile is Asp-39.

It belongs to the pseudouridine synthase TruB family. Type 1 subfamily.

It carries out the reaction uridine(55) in tRNA = pseudouridine(55) in tRNA. Responsible for synthesis of pseudouridine from uracil-55 in the psi GC loop of transfer RNAs. This Lactobacillus gasseri (strain ATCC 33323 / DSM 20243 / BCRC 14619 / CIP 102991 / JCM 1131 / KCTC 3163 / NCIMB 11718 / NCTC 13722 / AM63) protein is tRNA pseudouridine synthase B.